Consider the following 485-residue polypeptide: Glutamyl-tRNA(Gln) amidotransferase subunit A (485 aa).

Catalysis depends on charge relay system residues lysine 78 and serine 153. The Acyl-ester intermediate role is filled by serine 177.

The protein belongs to the amidase family. GatA subfamily. As to quaternary structure, heterotrimer of A, B and C subunits.

It carries out the reaction L-glutamyl-tRNA(Gln) + L-glutamine + ATP + H2O = L-glutaminyl-tRNA(Gln) + L-glutamate + ADP + phosphate + H(+). In terms of biological role, allows the formation of correctly charged Gln-tRNA(Gln) through the transamidation of misacylated Glu-tRNA(Gln) in organisms which lack glutaminyl-tRNA synthetase. The reaction takes place in the presence of glutamine and ATP through an activated gamma-phospho-Glu-tRNA(Gln). The sequence is that of Glutamyl-tRNA(Gln) amidotransferase subunit A from Desulfatibacillum aliphaticivorans.